The following is a 411-amino-acid chain: Formate-dependent phosphoribosylglycinamide formyltransferase (411 aa).

25–26 (EL) serves as a coordination point for N(1)-(5-phospho-beta-D-ribosyl)glycinamide. ATP is bound by residues Arg118, Lys159, 164–169 (SSGAGQ), 199–202 (EQYI), and Glu207. Residues 123–318 (TFAHDKLGLP…EFDLHARAIL (196 aa)) enclose the ATP-grasp domain. Residues Glu277 and Glu289 each coordinate Mg(2+). Residues Asp296, Lys366, and 373 to 374 (RR) contribute to the N(1)-(5-phospho-beta-D-ribosyl)glycinamide site.

It belongs to the PurK/PurT family. Homodimer.

The enzyme catalyses N(1)-(5-phospho-beta-D-ribosyl)glycinamide + formate + ATP = N(2)-formyl-N(1)-(5-phospho-beta-D-ribosyl)glycinamide + ADP + phosphate + H(+). It functions in the pathway purine metabolism; IMP biosynthesis via de novo pathway; N(2)-formyl-N(1)-(5-phospho-D-ribosyl)glycinamide from N(1)-(5-phospho-D-ribosyl)glycinamide (formate route): step 1/1. Functionally, involved in the de novo purine biosynthesis. Catalyzes the transfer of formate to 5-phospho-ribosyl-glycinamide (GAR), producing 5-phospho-ribosyl-N-formylglycinamide (FGAR). Formate is provided by PurU via hydrolysis of 10-formyl-tetrahydrofolate. The chain is Formate-dependent phosphoribosylglycinamide formyltransferase from Corynebacterium jeikeium (strain K411).